We begin with the raw amino-acid sequence, 126 residues long: UPF0047 protein AF_2050 (126 aa).

This sequence belongs to the UPF0047 family.

This is UPF0047 protein AF_2050 from Archaeoglobus fulgidus (strain ATCC 49558 / DSM 4304 / JCM 9628 / NBRC 100126 / VC-16).